We begin with the raw amino-acid sequence, 379 residues long: Chaperone protein DnaJ (379 aa).

In terms of domain architecture, J spans 4 to 69; the sequence is DLYETLGVKK…QKRAAYDRYG (66 aa). The CR-type zinc-finger motif lies at 137-215; it reads GKTAQIRVPT…CHGQGRVTEE (79 aa). The Zn(2+) site is built by cysteine 150, cysteine 153, cysteine 167, cysteine 170, cysteine 189, cysteine 192, cysteine 203, and cysteine 206. CXXCXGXG motif repeat units follow at residues 150–157, 167–174, 189–196, and 203–210; these read CDVCTGSG, CATCQGSG, CPTCGGRG, and CTKCHGQG.

The protein belongs to the DnaJ family. As to quaternary structure, homodimer. Requires Zn(2+) as cofactor.

The protein localises to the cytoplasm. Participates actively in the response to hyperosmotic and heat shock by preventing the aggregation of stress-denatured proteins and by disaggregating proteins, also in an autonomous, DnaK-independent fashion. Unfolded proteins bind initially to DnaJ; upon interaction with the DnaJ-bound protein, DnaK hydrolyzes its bound ATP, resulting in the formation of a stable complex. GrpE releases ADP from DnaK; ATP binding to DnaK triggers the release of the substrate protein, thus completing the reaction cycle. Several rounds of ATP-dependent interactions between DnaJ, DnaK and GrpE are required for fully efficient folding. Also involved, together with DnaK and GrpE, in the DNA replication of plasmids through activation of initiation proteins. The polypeptide is Chaperone protein DnaJ (Sinorhizobium fredii (strain NBRC 101917 / NGR234)).